Here is a 434-residue protein sequence, read N- to C-terminus: Enolase (434 aa).

Q163 serves as a coordination point for (2R)-2-phosphoglycerate. The Proton donor role is filled by E205. Mg(2+) is bound by residues D242, E289, and D316. The (2R)-2-phosphoglycerate site is built by K341, R370, S371, and K392. The active-site Proton acceptor is K341.

This sequence belongs to the enolase family. Mg(2+) serves as cofactor.

The protein resides in the cytoplasm. It localises to the secreted. Its subcellular location is the cell surface. The enzyme catalyses (2R)-2-phosphoglycerate = phosphoenolpyruvate + H2O. The protein operates within carbohydrate degradation; glycolysis; pyruvate from D-glyceraldehyde 3-phosphate: step 4/5. Functionally, catalyzes the reversible conversion of 2-phosphoglycerate (2-PG) into phosphoenolpyruvate (PEP). It is essential for the degradation of carbohydrates via glycolysis. The sequence is that of Enolase from Lacticaseibacillus casei (strain BL23) (Lactobacillus casei).